A 253-amino-acid polypeptide reads, in one-letter code: 7-carboxy-7-deazaguanine synthase (253 aa).

Residues 12 to 14 (WQG) and arginine 32 contribute to the substrate site. The region spanning 23 to 253 (AFGRRQIFVR…FQVHKYLNVL (231 aa)) is the Radical SAM core domain. Residues cysteine 36, cysteine 40, and cysteine 43 each contribute to the [4Fe-4S] cluster site. Residue serine 45 participates in Mg(2+) binding. Threonine 98 contacts substrate. Glycine 100 contacts S-adenosyl-L-methionine.

This sequence belongs to the radical SAM superfamily. 7-carboxy-7-deazaguanine synthase family. As to quaternary structure, homodimer. It depends on [4Fe-4S] cluster as a cofactor. The cofactor is S-adenosyl-L-methionine. Mg(2+) serves as cofactor.

It carries out the reaction 6-carboxy-5,6,7,8-tetrahydropterin + H(+) = 7-carboxy-7-deazaguanine + NH4(+). It functions in the pathway purine metabolism; 7-cyano-7-deazaguanine biosynthesis. Catalyzes the complex heterocyclic radical-mediated conversion of 6-carboxy-5,6,7,8-tetrahydropterin (CPH4) to 7-carboxy-7-deazaguanine (CDG), a step common to the biosynthetic pathways of all 7-deazapurine-containing compounds. This chain is 7-carboxy-7-deazaguanine synthase, found in Thermococcus kodakarensis (strain ATCC BAA-918 / JCM 12380 / KOD1) (Pyrococcus kodakaraensis (strain KOD1)).